A 364-amino-acid chain; its full sequence is Long-wave-sensitive opsin 1 (364 aa).

Residues 1–52 (MAQRWGPQKLAGGQPQAGFEDSTQASIFTYTNNNATRDPFEGPNYHIAPRWV) lie on the Extracellular side of the membrane. A glycan (O-linked (GlcNAc) serine) is linked at Ser-22. Residue Asn-34 is glycosylated (N-linked (GlcNAc...) asparagine). A helical membrane pass occupies residues 53–77 (YHVTSAWMIFVVIASVFTNGLVLAA). The Cytoplasmic portion of the chain corresponds to 78–89 (TMRFKKLRHPLN). The chain crosses the membrane as a helical span at residues 90–115 (WILVNLAVADLAETIIASTISVVNQI). Topologically, residues 116–129 (YGYFVLGHPMCVVE) are extracellular. Cys-126 and Cys-203 are joined by a disulfide. A helical transmembrane segment spans residues 130 to 149 (GYTVSLCGITGLWSLAIISW). Over 150–168 (ERWMVVCKPFGNVRFDAKL) the chain is Cytoplasmic. A helical membrane pass occupies residues 169-192 (AVAGIAFSWIWAAVWTAPPIFGWS). The Extracellular portion of the chain corresponds to 193–218 (RYWPHGLKTSCGPDVFSGSSYPGVQS). A helical membrane pass occupies residues 219–246 (YMIVLMITCCIIPLSVIVLCYLQVWLAI). Over 247–268 (RAVAKQQKESESTQKAEKEVTR) the chain is Cytoplasmic. The helical transmembrane segment at 269-292 (MVMVMVFAFCLCWGPYTFFACFAA) threads the bilayer. Residues 293–300 (AHPGYAFH) are Extracellular-facing. Residues 301–325 (PLVAALPAYFAKSATIYNPIIYVFM) form a helical membrane-spanning segment. Lys-312 is subject to N6-(retinylidene)lysine. The Cytoplasmic segment spans residues 326–364 (NRQFRNCILQLFGKKVDDSSELSSVSKTEASSVSSVSPA).

The protein belongs to the G-protein coupled receptor 1 family. Opsin subfamily. In terms of processing, phosphorylated on some or all of the serine and threonine residues present in the C-terminal region. The three color pigments are found in the cone photoreceptor cells. Expressed in retina.

It localises to the membrane. Its function is as follows. Visual pigments are the light-absorbing molecules that mediate vision. They consist of an apoprotein, opsin, covalently linked to cis-retinal. This is Long-wave-sensitive opsin 1 (OPN1LW) from Equus caballus (Horse).